We begin with the raw amino-acid sequence, 228 residues long: Interferon-induced transmembrane protein 10 (228 aa).

Residues 1-154 (MREGKRGPPC…PDTTEVNDYY (154 aa)) lie on the Extracellular side of the membrane. Residues 29 to 49 (AQGPGQCPAPLGDPASTTDGA) are disordered. A helical membrane pass occupies residues 155–175 (LWSIFNFVYLNFCCLGFIALA). 2 S-palmitoyl cysteine lipidation sites follow: Cys167 and Cys168. At 176 to 200 (YSLKVRDKKLLNDLNGAVEDAKTAR) the chain is on the cytoplasmic side. The helical transmembrane segment at 201–221 (LFNITSSALAASCIILVFIFL) threads the bilayer. Over 222–228 (RYPLTDY) the chain is Extracellular.

It belongs to the CD225/Dispanin family.

The protein localises to the cell membrane. The sequence is that of Interferon-induced transmembrane protein 10 (IFITM10) from Homo sapiens (Human).